A 249-amino-acid polypeptide reads, in one-letter code: Segregation and condensation protein A (249 aa).

This sequence belongs to the ScpA family. In terms of assembly, component of a cohesin-like complex composed of ScpA, ScpB and the Smc homodimer, in which ScpA and ScpB bind to the head domain of Smc. The presence of the three proteins is required for the association of the complex with DNA.

It localises to the cytoplasm. In terms of biological role, participates in chromosomal partition during cell division. May act via the formation of a condensin-like complex containing Smc and ScpB that pull DNA away from mid-cell into both cell halves. The sequence is that of Segregation and condensation protein A from Listeria monocytogenes serotype 4b (strain CLIP80459).